The primary structure comprises 274 residues: Penicillin-insensitive murein endopeptidase (274 aa).

The N-terminal stretch at 1-19 is a signal peptide; the sequence is MKKTAIALLAWFVSSASLA. Cystine bridges form between Cys-44–Cys-265, Cys-187–Cys-235, and Cys-216–Cys-223. Residues His-110, His-113, Asp-120, Asp-147, His-150, and His-211 each coordinate Zn(2+). Positions 225-274 are disordered; the sequence is DQPLPPPGDGCGAELQSWFEPPKLGTTKPEKKTPPPLPPSCQALLDEHVL.

This sequence belongs to the peptidase M74 family. Dimer. Zn(2+) serves as cofactor.

The protein localises to the periplasm. Its function is as follows. Murein endopeptidase that cleaves the D-alanyl-meso-2,6-diamino-pimelyl amide bond that connects peptidoglycan strands. Likely plays a role in the removal of murein from the sacculus. The sequence is that of Penicillin-insensitive murein endopeptidase from Salmonella paratyphi B (strain ATCC BAA-1250 / SPB7).